The primary structure comprises 662 residues: Glycogen debranching enzyme (662 aa).

The Nucleophile role is filled by Asp338. Residue Glu373 is the Proton donor of the active site.

It belongs to the glycosyl hydrolase 13 family.

The enzyme catalyses Hydrolysis of (1-&gt;6)-alpha-D-glucosidic linkages to branches with degrees of polymerization of three or four glucose residues in limit dextrin.. It functions in the pathway glycan degradation; glycogen degradation. Removes maltotriose and maltotetraose chains that are attached by 1,6-alpha-linkage to the limit dextrin main chain, generating a debranched limit dextrin. The protein is Glycogen debranching enzyme of Yersinia pestis.